The chain runs to 1067 residues: Zinc finger MIZ domain-containing protein 1 (1067 aa).

The tract at residues 1-120 (MNSMDRHIQQ…HQKSRQSDPP (120 aa)) is sufficient for transactivation activity; sufficient for interaction with NOTCH1. Lys91 participates in a covalent cross-link: Glycyl lysine isopeptide (Lys-Gly) (interchain with G-Cter in SUMO2). Disordered stretches follow at residues 112–141 (QKSRQSDPPGKLPMQPPLSSMSSMKPTLSH) and 327–542 (NSQF…PFPP). The span at 128 to 141 (PLSSMSSMKPTLSH) shows a compositional bias: low complexity. The segment covering 413–429 (YGNQQYGPNSQFPTQPG) has biased composition (polar residues). Over residues 431–440 (YPAPNPPRPL) the composition is skewed to pro residues. A compositionally biased stretch (low complexity) spans 479 to 497 (NNTFSGSSYSNYSQGNVNR). The span at 510–521 (SPVPGNPTPPMT) shows a compositional bias: pro residues. Residues 727 to 808 (GEDGVEQTAI…MWGILNAIQH (82 aa)) form an SP-RING-type zinc finger. Cys758, His760, Cys781, and Cys784 together coordinate Zn(2+). Glycyl lysine isopeptide (Lys-Gly) (interchain with G-Cter in SUMO2) cross-links involve residues Lys834 and Lys843. The segment at 837–1067 (PDGIPSKRFK…DDLLSLFENN (231 aa)) is transactivation domain. Residues 868 to 879 (GPSPYPLPPPPG) show a composition bias toward pro residues. A disordered region spans residues 868–1067 (GPSPYPLPPP…DDLLSLFENN (200 aa)). Polar residues-rich tracts occupy residues 881-895 (TNSNDYSSQGNNYQG) and 951-961 (SSDQPHPSIQQ). Positions 981–996 (APPPPPSQPPRQPPQA) are enriched in pro residues. Over residues 1040 to 1067 (PDELLSYLDPPDLPSNSNDDLLSLFENN) the composition is skewed to low complexity.

In terms of assembly, interacts with AR, but not with ESR1, NR3C1, PGR, THRB nor VDR. Interacts with NOTCH1 and RBPJ. Interacts with SMARCA4. Interacts (via SP-RING-type domain) with SMAD3 and SMAD4 (via MH2 domain). Expressed most abundantly in ovary and, at lower levels, in prostate, spleen and testis. Weak expression, if any, in thymus, small intestine, colon and peripheral blood leukocytes.

Its subcellular location is the nucleus. It localises to the nucleoplasm. The protein localises to the cytoplasm. Acts as a transcriptional coactivator. Increases ligand-dependent transcriptional activity of AR and promotes AR sumoylation. The stimulation of AR activity is dependent upon sumoylation. Also functions as a transcriptional coactivator in the TGF-beta signaling pathway by increasing the activity of the SMAD3/SMAD4 transcriptional complex. Involved in transcriptional activation of a subset of NOTCH1 target genes including MYC. Involved in thymocyte and T cell development. Involved in the regulation of postmitotic positioning of pyramidal neurons in the developing cerebral cortex. This is Zinc finger MIZ domain-containing protein 1 from Homo sapiens (Human).